The following is a 744-amino-acid chain: Receptor-like serine/threonine-protein kinase ALE2 (744 aa).

Positions 1–19 (MRNFAMLLLLILLLHSLAS) are cleaved as a signal peptide. The Extracellular segment spans residues 20–260 (FPICFARLFP…SQGIGFRTIA (241 aa)). A compositionally biased stretch (pro residues) spans 59–68 (PAFSPNPSRI). Residues 59–79 (PAFSPNPSRIPPLRHKGHHRH) form a disordered region. The segment covering 70–79 (PLRHKGHHRH) has biased composition (basic residues). Residues Asn-87, Asn-186, Asn-204, Asn-243, and Asn-249 are each glycosylated (N-linked (GlcNAc...) asparagine). The chain crosses the membrane as a helical span at residues 261–281 (IIALSGFVLILVLVGAISIIV). Over 282-744 (KWKKIGKSSN…HLWSGNGDWL (463 aa)) the chain is Cytoplasmic. The Protein kinase domain occupies 349-619 (FSAKRVLGEG…GEVVQALKLI (271 aa)). Residues 355–363 (LGEGGFGRV) and Lys-377 contribute to the ATP site. The active-site Proton acceptor is the Asp-470. Disordered stretches follow at residues 681 to 705 (EDME…PNRS) and 722 to 744 (GSMS…GDWL).

Belongs to the protein kinase superfamily. Ser/Thr protein kinase family. Autophosphorylated and phosphorylated by ACR4.

The protein resides in the cell membrane. It catalyses the reaction L-seryl-[protein] + ATP = O-phospho-L-seryl-[protein] + ADP + H(+). It carries out the reaction L-threonyl-[protein] + ATP = O-phospho-L-threonyl-[protein] + ADP + H(+). In terms of biological role, required during the differentiation of the protoderm into shoots epidermis and cuticle. This chain is Receptor-like serine/threonine-protein kinase ALE2 (ALE2), found in Arabidopsis thaliana (Mouse-ear cress).